The following is a 124-amino-acid chain: Small ribosomal subunit protein uS13 (124 aa).

A disordered region spans residues 96-124 (LPVRGQRTKTNARTRKGPRRTVAGKKKAK).

This sequence belongs to the universal ribosomal protein uS13 family. Part of the 30S ribosomal subunit. Forms a loose heterodimer with protein S19. Forms two bridges to the 50S subunit in the 70S ribosome.

In terms of biological role, located at the top of the head of the 30S subunit, it contacts several helices of the 16S rRNA. In the 70S ribosome it contacts the 23S rRNA (bridge B1a) and protein L5 of the 50S subunit (bridge B1b), connecting the 2 subunits; these bridges are implicated in subunit movement. Contacts the tRNAs in the A and P-sites. This chain is Small ribosomal subunit protein uS13, found in Symbiobacterium thermophilum (strain DSM 24528 / JCM 14929 / IAM 14863 / T).